The following is a 397-amino-acid chain: Dual-specificity RNA methyltransferase RlmN (397 aa).

Residue Glu-120 is the Proton acceptor of the active site. In terms of domain architecture, Radical SAM core spans Glu-126–Leu-369. Cys-133 and Cys-372 are disulfide-bonded. Residues Cys-140, Cys-144, and Cys-147 each coordinate [4Fe-4S] cluster. Residues Gly-198–Glu-199, Ser-230, Ser-252–His-254, and Asn-329 each bind S-adenosyl-L-methionine. Residue Cys-372 is the S-methylcysteine intermediate of the active site.

The protein belongs to the radical SAM superfamily. RlmN family. Requires [4Fe-4S] cluster as cofactor.

It is found in the cytoplasm. It catalyses the reaction adenosine(2503) in 23S rRNA + 2 reduced [2Fe-2S]-[ferredoxin] + 2 S-adenosyl-L-methionine = 2-methyladenosine(2503) in 23S rRNA + 5'-deoxyadenosine + L-methionine + 2 oxidized [2Fe-2S]-[ferredoxin] + S-adenosyl-L-homocysteine. The enzyme catalyses adenosine(37) in tRNA + 2 reduced [2Fe-2S]-[ferredoxin] + 2 S-adenosyl-L-methionine = 2-methyladenosine(37) in tRNA + 5'-deoxyadenosine + L-methionine + 2 oxidized [2Fe-2S]-[ferredoxin] + S-adenosyl-L-homocysteine. Its function is as follows. Specifically methylates position 2 of adenine 2503 in 23S rRNA and position 2 of adenine 37 in tRNAs. m2A2503 modification seems to play a crucial role in the proofreading step occurring at the peptidyl transferase center and thus would serve to optimize ribosomal fidelity. In Nitrobacter winogradskyi (strain ATCC 25391 / DSM 10237 / CIP 104748 / NCIMB 11846 / Nb-255), this protein is Dual-specificity RNA methyltransferase RlmN.